The sequence spans 492 residues: 2-succinylbenzoate--CoA ligase (492 aa).

This sequence belongs to the ATP-dependent AMP-binding enzyme family. MenE subfamily.

It carries out the reaction 2-succinylbenzoate + ATP + CoA = 2-succinylbenzoyl-CoA + AMP + diphosphate. It participates in quinol/quinone metabolism; 1,4-dihydroxy-2-naphthoate biosynthesis; 1,4-dihydroxy-2-naphthoate from chorismate: step 5/7. It functions in the pathway quinol/quinone metabolism; menaquinone biosynthesis. Functionally, converts 2-succinylbenzoate (OSB) to 2-succinylbenzoyl-CoA (OSB-CoA). The polypeptide is 2-succinylbenzoate--CoA ligase (Staphylococcus aureus (strain Mu3 / ATCC 700698)).